The sequence spans 37 residues: Large ribosomal subunit protein bL36 (37 aa).

Belongs to the bacterial ribosomal protein bL36 family.

The protein is Large ribosomal subunit protein bL36 of Brevibacillus brevis (strain 47 / JCM 6285 / NBRC 100599).